We begin with the raw amino-acid sequence, 241 residues long: MNYAKLCEDLTKWIKEEVESANLKGAVFGISGGIDSAVLACLCKKAFGDNALGLIMPIKSNPKDEEDARILAKSIGLRFTKVDLNESYDALIGTFEKNSVEMAASNIKPRLRMITLYYYAQNNGYMVLSGSNRSEFMTGYFTKYGDSGADLMPLLNLYKTDIFEMAKVLGVPDVIINKKPSAGLWEGQTDEDEFGFTYEELDDYLMNNSNTKSKDLIDKKIKQSEHKRKFAKSFEFDRRNY.

29–36 (GISGGIDS) contacts ATP. A Mg(2+)-binding site is contributed by D35. R110 serves as a coordination point for deamido-NAD(+). E135 is a Mg(2+) binding site. Positions 143 and 150 each coordinate deamido-NAD(+). Positions 159 and 181 each coordinate ATP. 226–227 (HK) lines the deamido-NAD(+) pocket.

The protein belongs to the NAD synthetase family. In terms of assembly, homodimer.

It carries out the reaction deamido-NAD(+) + NH4(+) + ATP = AMP + diphosphate + NAD(+) + H(+). Its pathway is cofactor biosynthesis; NAD(+) biosynthesis; NAD(+) from deamido-NAD(+) (ammonia route): step 1/1. Catalyzes the ATP-dependent amidation of deamido-NAD to form NAD. Uses ammonia as a nitrogen source. The sequence is that of NH(3)-dependent NAD(+) synthetase from Finegoldia magna (strain ATCC 29328 / DSM 20472 / WAL 2508) (Peptostreptococcus magnus).